Consider the following 537-residue polypeptide: Mitochondrial distribution and morphology protein 34 (537 aa).

One can recognise an SMP-LTD domain in the interval 1–195 (MAFNFNWSPL…LPAIIHRLSL (195 aa)). 4 disordered regions span residues 320 to 339 (YTFS…RPSL), 348 to 403 (GLSL…IMPH), 421 to 493 (GRSP…DTSS), and 516 to 537 (KNGN…YEAR). Residues 355 to 371 (RHSKAGRKKKTRVVNLR) show a composition bias toward basic residues. Over residues 378 to 391 (ANSEEEEDTPETDS) the composition is skewed to acidic residues. Residues 425–441 (DLQQQPRRPSFRAQATN) show a composition bias toward polar residues.

It belongs to the MDM34 family. As to quaternary structure, component of the ER-mitochondria encounter structure (ERMES) or MDM complex, composed of MMM1, MDM10, MDM12 and MDM34.

It is found in the mitochondrion outer membrane. In terms of biological role, component of the ERMES/MDM complex, which serves as a molecular tether to connect the endoplasmic reticulum (ER) and mitochondria. Components of this complex are involved in the control of mitochondrial shape and protein biogenesis, and function in nonvesicular lipid trafficking between the ER and mitochondria. MDM34 is required for the interaction of the ER-resident membrane protein MMM1 and the outer mitochondrial membrane-resident beta-barrel protein MDM10. The chain is Mitochondrial distribution and morphology protein 34 from Chaetomium globosum (strain ATCC 6205 / CBS 148.51 / DSM 1962 / NBRC 6347 / NRRL 1970) (Soil fungus).